Here is a 123-residue protein sequence, read N- to C-terminus: UPF0738 protein BALH_1059 (123 aa).

This sequence belongs to the UPF0738 family.

The protein is UPF0738 protein BALH_1059 of Bacillus thuringiensis (strain Al Hakam).